We begin with the raw amino-acid sequence, 1115 residues long: Ubiquitin C-terminal hydrolase 13 (1115 aa).

The disordered stretch occupies residues 1–51; it reads MTMMTPPPLDQQEDEEMLVPNPDLVEGPQPMEVAQTDPAATAVENPPPEDP. The MATH domain occupies 53 to 178; it reads SLKFTWTIPM…NDTVLIEAEV (126 aa). One can recognise a USP domain in the interval 198-522; that stretch reads VGLKNQGATC…NAYMLVYIRE (325 aa). Catalysis depends on C207, which acts as the Nucleophile. H454 serves as the catalytic Proton acceptor.

Belongs to the peptidase C19 family. As to quaternary structure, interacts with SIC/RON3. Interacts with RGI1 and RGI2.

The catalysed reaction is Thiol-dependent hydrolysis of ester, thioester, amide, peptide and isopeptide bonds formed by the C-terminal Gly of ubiquitin (a 76-residue protein attached to proteins as an intracellular targeting signal).. In terms of biological role, recognizes and hydrolyzes the peptide bond at the C-terminal Gly of ubiquitin. Involved in the processing of poly-ubiquitin precursors as well as that of ubiquitinated proteins. Positive regulator of root meristem development that, together with UBP12, prevents the ubiquitination and turnover of RGFR1 induced by the RGF1 hormone peptide, thus influencing PLT1 and PLT2 expression. The protein is Ubiquitin C-terminal hydrolase 13 of Arabidopsis thaliana (Mouse-ear cress).